Reading from the N-terminus, the 510-residue chain is Bifunctional purine biosynthesis protein PurH (510 aa).

An MGS-like domain is found at 1–143 (MTKRALISVS…KNHSGVLVLV (143 aa)).

Belongs to the PurH family.

It carries out the reaction (6R)-10-formyltetrahydrofolate + 5-amino-1-(5-phospho-beta-D-ribosyl)imidazole-4-carboxamide = 5-formamido-1-(5-phospho-D-ribosyl)imidazole-4-carboxamide + (6S)-5,6,7,8-tetrahydrofolate. The catalysed reaction is IMP + H2O = 5-formamido-1-(5-phospho-D-ribosyl)imidazole-4-carboxamide. It participates in purine metabolism; IMP biosynthesis via de novo pathway; 5-formamido-1-(5-phospho-D-ribosyl)imidazole-4-carboxamide from 5-amino-1-(5-phospho-D-ribosyl)imidazole-4-carboxamide (10-formyl THF route): step 1/1. The protein operates within purine metabolism; IMP biosynthesis via de novo pathway; IMP from 5-formamido-1-(5-phospho-D-ribosyl)imidazole-4-carboxamide: step 1/1. This chain is Bifunctional purine biosynthesis protein PurH, found in Deinococcus deserti (strain DSM 17065 / CIP 109153 / LMG 22923 / VCD115).